The primary structure comprises 448 residues: tRNA modification GTPase MnmE (448 aa).

3 residues coordinate (6S)-5-formyl-5,6,7,8-tetrahydrofolate: arginine 24, glutamate 81, and lysine 120. The TrmE-type G domain maps to 216-373 (GLNVVLVGAP…LKRTLLCEAG (158 aa)). Asparagine 226 is a K(+) binding site. GTP contacts are provided by residues 226–231 (NVGKSS), 245–251 (TDIAGTT), and 270–273 (DTAG). Serine 230 provides a ligand contact to Mg(2+). K(+) is bound by residues threonine 245, isoleucine 247, and threonine 250. Residue threonine 251 coordinates Mg(2+). Lysine 448 serves as a coordination point for (6S)-5-formyl-5,6,7,8-tetrahydrofolate.

Belongs to the TRAFAC class TrmE-Era-EngA-EngB-Septin-like GTPase superfamily. TrmE GTPase family. In terms of assembly, homodimer. Heterotetramer of two MnmE and two MnmG subunits. K(+) serves as cofactor.

The protein localises to the cytoplasm. Its function is as follows. Exhibits a very high intrinsic GTPase hydrolysis rate. Involved in the addition of a carboxymethylaminomethyl (cmnm) group at the wobble position (U34) of certain tRNAs, forming tRNA-cmnm(5)s(2)U34. The polypeptide is tRNA modification GTPase MnmE (Neisseria gonorrhoeae (strain ATCC 700825 / FA 1090)).